A 202-amino-acid chain; its full sequence is Xanthine phosphoribosyltransferase (202 aa).

Positions 20 and 27 each coordinate xanthine. Residue 128–132 (ANGEA) participates in 5-phospho-alpha-D-ribose 1-diphosphate binding. A xanthine-binding site is contributed by K156.

It belongs to the purine/pyrimidine phosphoribosyltransferase family. Xpt subfamily. As to quaternary structure, homodimer.

It localises to the cytoplasm. It catalyses the reaction XMP + diphosphate = xanthine + 5-phospho-alpha-D-ribose 1-diphosphate. Its pathway is purine metabolism; XMP biosynthesis via salvage pathway; XMP from xanthine: step 1/1. In terms of biological role, converts the preformed base xanthine, a product of nucleic acid breakdown, to xanthosine 5'-monophosphate (XMP), so it can be reused for RNA or DNA synthesis. This is Xanthine phosphoribosyltransferase from Alkaliphilus metalliredigens (strain QYMF).